Here is a 286-residue protein sequence, read N- to C-terminus: Pyridoxal kinase PdxY (286 aa).

Substrate contacts are provided by residues Ser-9 and Thr-44–Gln-45. ATP contacts are provided by residues Asp-111, Ala-143, Glu-148, Lys-181, and Arg-208–Val-211. Asp-223 contacts substrate.

This sequence belongs to the pyridoxine kinase family. PdxY subfamily. Homodimer. The cofactor is Mg(2+).

It carries out the reaction pyridoxal + ATP = pyridoxal 5'-phosphate + ADP + H(+). The protein operates within cofactor metabolism; pyridoxal 5'-phosphate salvage; pyridoxal 5'-phosphate from pyridoxal: step 1/1. Functionally, pyridoxal kinase involved in the salvage pathway of pyridoxal 5'-phosphate (PLP). Catalyzes the phosphorylation of pyridoxal to PLP. The sequence is that of Pyridoxal kinase PdxY from Salmonella choleraesuis (strain SC-B67).